Reading from the N-terminus, the 231-residue chain is Large ribosomal subunit protein uL1 (231 aa).

This sequence belongs to the universal ribosomal protein uL1 family. As to quaternary structure, part of the 50S ribosomal subunit.

Binds directly to 23S rRNA. The L1 stalk is quite mobile in the ribosome, and is involved in E site tRNA release. In terms of biological role, protein L1 is also a translational repressor protein, it controls the translation of the L11 operon by binding to its mRNA. This chain is Large ribosomal subunit protein uL1, found in Paracidovorax citrulli (strain AAC00-1) (Acidovorax citrulli).